Consider the following 410-residue polypeptide: Platelet-activating factor acetylhydrolase IB subunit beta (410 aa).

The interval 1-38 is required for self-association and interaction with PAFAH1B2 and PAFAH1B3; it reads MVLSQRQRDELNRAIADYLRSNGYEEAYSVFKKEAELD. Residues 1-66 are interaction with NDE1; it reads MVLSQRQRDE…SVIRLQKKVM (66 aa). The tract at residues 1 to 102 is interaction with NDEL1; sequence MVLSQRQRDE…EWIPRPPEKY (102 aa). The region spanning 7–39 is the LisH domain; that stretch reads QRDELNRAIADYLRSNGYEEAYSVFKKEAELDV. K53 is subject to N6-acetyllysine. Positions 56–82 form a coiled coil; it reads TSVIRLQKKVMELESKLNEAKEEFTSG. Positions 83–410 are interaction with dynein and dynactin; sequence GPLGQKRDPK…DQTVKVWECR (328 aa). 7 WD repeats span residues 106 to 147, 148 to 187, 190 to 229, 232 to 271, 274 to 333, 336 to 377, and 378 to 410; these read GHRS…RTLK, GHTD…CIRT, GHDH…CVKT, GHRE…CKAE, EHEH…CLMT, GHDN…KTLN, and AHEH…WECR. Position 109 is a phosphoserine (S109). The interval 367 to 409 is interaction with DCX; the sequence is YKNKRCMKTLNAHEHFVTSLDFHKTAPYVVTGSVDQTVKVWEC. Residues 388-410 form an interaction with NDEL1 region; sequence FHKTAPYVVTGSVDQTVKVWECR.

The protein belongs to the WD repeat LIS1/nudF family. Component of the cytosolic PAF-AH (I) heterotetrameric enzyme, which is composed of PAFAH1B1 (beta), PAFAH1B2 (alpha2) and PAFAH1B3 (alpha1) subunits. The catalytic activity of the enzyme resides in the alpha1 (PAFAH1B3) and alpha2 (PAFAH1B2) subunits, whereas the beta subunit (PAFAH1B1) has regulatory activity. Trimer formation is not essential for the catalytic activity. Interacts with the catalytic dimer of PAF-AH (I) heterotetrameric enzyme: interacts with PAFAH1B2 homodimer (alpha2/alpha2 homodimer), PAFAH1B3 homodimer (alpha1/alpha1 homodimer) and PAFAH1B2-PAFAH1B3 heterodimer (alpha2/alpha1 heterodimer). Interacts with IQGAP1, KATNB1 and NUDC. Interacts with DAB1 when DAB1 is phosphorylated in response to RELN/reelin signaling. Can self-associate. Interacts with DCX, dynein, dynactin, NDE1, NDEL1 and RSN. Interacts with DISC1, and this interaction is enhanced by NDEL1. Interacts with INTS13. Interacts with DCDC1. Fairly ubiquitous expression in both the frontal and occipital areas of the brain.

It is found in the cytoplasm. The protein resides in the cytoskeleton. It localises to the microtubule organizing center. Its subcellular location is the centrosome. The protein localises to the spindle. It is found in the nucleus membrane. Its function is as follows. Regulatory subunit (beta subunit) of the cytosolic type I platelet-activating factor (PAF) acetylhydrolase (PAF-AH (I)), an enzyme that catalyzes the hydrolyze of the acetyl group at the sn-2 position of PAF and its analogs and participates in PAF inactivation. Regulates the PAF-AH (I) activity in a catalytic dimer composition-dependent manner. Required for proper activation of Rho GTPases and actin polymerization at the leading edge of locomoting cerebellar neurons and postmigratory hippocampal neurons in response to calcium influx triggered via NMDA receptors. Positively regulates the activity of the minus-end directed microtubule motor protein dynein. May enhance dynein-mediated microtubule sliding by targeting dynein to the microtubule plus end. Required for several dynein- and microtubule-dependent processes such as the maintenance of Golgi integrity, the peripheral transport of microtubule fragments and the coupling of the nucleus and centrosome. Required during brain development for the proliferation of neuronal precursors and the migration of newly formed neurons from the ventricular/subventricular zone toward the cortical plate. Neuronal migration involves a process called nucleokinesis, whereby migrating cells extend an anterior process into which the nucleus subsequently translocates. During nucleokinesis dynein at the nuclear surface may translocate the nucleus towards the centrosome by exerting force on centrosomal microtubules. May also play a role in other forms of cell locomotion including the migration of fibroblasts during wound healing. Required for dynein recruitment to microtubule plus ends and BICD2-bound cargos. May modulate the Reelin pathway through interaction of the PAF-AH (I) catalytic dimer with VLDLR. This chain is Platelet-activating factor acetylhydrolase IB subunit beta, found in Homo sapiens (Human).